Reading from the N-terminus, the 630-residue chain is Transferrin-binding protein B (630 aa).

An N-terminal signal peptide occupies residues 1–17 (MKSVPLITGGLSFLLSA). C18 carries N-palmitoyl cysteine lipidation. Residue C18 is the site of S-diacylglycerol cysteine attachment. 3 disordered regions span residues 26 to 53 (DVDD…KSNL), 280 to 301 (VTPT…LEGG), and 591 to 613 (NNPT…SPNA). Positions 32–50 (NPSSSKPRYQDDTSSSRTK) are enriched in polar residues.

The protein belongs to the TbpB family.

The protein localises to the cell outer membrane. Its subcellular location is the cell surface. Functionally, haemophilus acquires iron by extracting it from serum transferrin (TF) in its human host. Acts as a transferrin receptor and is required for transferrin utilization. The chain is Transferrin-binding protein B from Haemophilus influenzae (strain 86-028NP).